The chain runs to 441 residues: Protein C-ets-1 (441 aa).

Lys8 and Lys15 each carry N6-acetyllysine; alternate. Glycyl lysine isopeptide (Lys-Gly) (interchain with G-Cter in SUMO2); alternate cross-links involve residues Lys8 and Lys15. Thr38 is subject to Phosphothreonine; by MAPK. Residues 51-136 (ATFSGFTKEQ…EHLEILQKED (86 aa)) enclose the PNT domain. The tract at residues 130-243 (EILQKEDVKP…DNMCMGRTSR (114 aa)) is activation domain; required for transcription activation. Lys138 is covalently cross-linked (Glycyl lysine isopeptide (Lys-Gly) (interchain with G-Cter in SUMO2)). Tyr223 is subject to Phosphotyrosine. Lys227 participates in a covalent cross-link: Glycyl lysine isopeptide (Lys-Gly) (interchain with G-Cter in SUMO). Residues Ser251 and Ser254 each carry the phosphoserine modification. At Thr265 the chain carries Phosphothreonine. Phosphoserine occurs at positions 267, 270, 282, and 285. Residues 304–312 (FKDYVRDRA) are helix HI-1. N6-acetyllysine is present on Lys305. Positions 323–330 (AAALAGYT) are helix HI-2. The ETS DNA-binding region spans 335–415 (IQLWQFLLEL…AGKRYVYRFV (81 aa)). The helix H4 stretch occupies residues 418–422 (LQSLL). The tract at residues 426 to 432 (PEELHAM) is helix H5.

Belongs to the ETS family. In terms of assembly, binds DNA as a homodimer; homodimerization is required for transcription activation. Interacts with MAF and MAFB. Interacts with PAX5; the interaction alters DNA-binding properties. Interacts with DAXX. Interacts with UBE2I. Interacts with SP100; the interaction is direct and modulates ETS1 transcriptional activity. In terms of processing, sumoylated on Lys-15 and Lys-227, preferentially with SUMO2; which inhibits transcriptional activity. Ubiquitinated; which induces proteasomal degradation. Post-translationally, phosphorylation at Ser-251, Ser-282 and Ser-285 by CaMK2/CaMKII in response to calcium signaling decreases affinity for DNA: an increasing number of phosphoserines causes DNA-binding to become progressively weaker. In terms of tissue distribution, highly expressed within lymphoid cells. Isoforms c-ETS-1A and Ets-1 p27 are both detected in all fetal tissues tested, but vary with tissue type in adult tissues. None is detected in brain or kidney.

Its subcellular location is the nucleus. It localises to the cytoplasm. With respect to regulation, autoinhibited by a module composed of four alpha helices (HI-1, HI-2, H4, and H5) that flank the DNA-binding ETS domain, reducing the affinity for DNA. Phosphorylation by CaMK2/CaMKII in response to calcium signaling decreases affinity for DNA. Functionally, transcription factor. Directly controls the expression of cytokine and chemokine genes in a wide variety of different cellular contexts. May control the differentiation, survival and proliferation of lymphoid cells. May also regulate angiogenesis through regulation of expression of genes controlling endothelial cell migration and invasion. Acts as a dominant-negative for isoform c-ETS-1A. In Homo sapiens (Human), this protein is Protein C-ets-1 (ETS1).